Consider the following 166-residue polypeptide: Phosphodiesterase MJ0936 (166 aa).

Mn(2+)-binding residues include D8, H10, D36, N59, H97, H120, and H122. Ni(2+) is bound by residues D8, H10, D36, N59, H97, H120, and H122.

Belongs to the metallophosphoesterase superfamily. YfcE family. As to quaternary structure, monomer. Requires Ni(2+) as cofactor. It depends on Mn(2+) as a cofactor.

Its activity is regulated as follows. Competitively inhibited by phosphate. Shows phosphodiesterase activity. Hydrolyzes phosphodiesters bonds in the artificial chromogenic substrates bis-p-nitrophenyl phosphate (bis-pNPP), and less efficiently thymidine 5'-monophosphate p-nitrophenyl ester (pNP-TMP) and p-nitrophenylphosphorylcholine (pNPPC). No catalytic activity was found toward cAMP or cGMP, nucleotides or phospholipase substrates such as phosphatidylcholine. The physiological substrate is unknown. In Methanocaldococcus jannaschii (strain ATCC 43067 / DSM 2661 / JAL-1 / JCM 10045 / NBRC 100440) (Methanococcus jannaschii), this protein is Phosphodiesterase MJ0936.